Reading from the N-terminus, the 182-residue chain is UPF0200 protein Mboo_1593 (182 aa).

8 to 15 lines the ATP pocket; sequence GLPASGKG.

The protein belongs to the UPF0200 family.

This chain is UPF0200 protein Mboo_1593, found in Methanoregula boonei (strain DSM 21154 / JCM 14090 / 6A8).